The following is a 475-amino-acid chain: Aspartyl/glutamyl-tRNA(Asn/Gln) amidotransferase subunit B (475 aa).

This sequence belongs to the GatB/GatE family. GatB subfamily. As to quaternary structure, heterotrimer of A, B and C subunits.

It carries out the reaction L-glutamyl-tRNA(Gln) + L-glutamine + ATP + H2O = L-glutaminyl-tRNA(Gln) + L-glutamate + ADP + phosphate + H(+). The enzyme catalyses L-aspartyl-tRNA(Asn) + L-glutamine + ATP + H2O = L-asparaginyl-tRNA(Asn) + L-glutamate + ADP + phosphate + 2 H(+). Its function is as follows. Allows the formation of correctly charged Asn-tRNA(Asn) or Gln-tRNA(Gln) through the transamidation of misacylated Asp-tRNA(Asn) or Glu-tRNA(Gln) in organisms which lack either or both of asparaginyl-tRNA or glutaminyl-tRNA synthetases. The reaction takes place in the presence of glutamine and ATP through an activated phospho-Asp-tRNA(Asn) or phospho-Glu-tRNA(Gln). In Clostridium novyi (strain NT), this protein is Aspartyl/glutamyl-tRNA(Asn/Gln) amidotransferase subunit B.